Consider the following 464-residue polypeptide: Adenosylhomocysteinase (464 aa).

Residues T56, D131, and E190 each coordinate substrate. 191–193 (TTT) serves as a coordination point for NAD(+). Residues K220 and D224 each contribute to the substrate site. Residues N225, 254 to 259 (GFGDVG), E277, N312, 333 to 335 (IGH), and N378 each bind NAD(+).

This sequence belongs to the adenosylhomocysteinase family. NAD(+) is required as a cofactor.

Its subcellular location is the cytoplasm. The enzyme catalyses S-adenosyl-L-homocysteine + H2O = L-homocysteine + adenosine. It participates in amino-acid biosynthesis; L-homocysteine biosynthesis; L-homocysteine from S-adenosyl-L-homocysteine: step 1/1. In terms of biological role, may play a key role in the regulation of the intracellular concentration of adenosylhomocysteine. This chain is Adenosylhomocysteinase, found in Zymomonas mobilis subsp. mobilis (strain ATCC 31821 / ZM4 / CP4).